Reading from the N-terminus, the 203-residue chain is 22.3 kDa class VI heat shock protein (203 aa).

Residues 86-203 enclose the sHSP domain; it reads ALRRGARTTV…DAHQAAAATA (118 aa).

Belongs to the small heat shock protein (HSP20) family. In terms of assembly, may form oligomeric structures.

It localises to the cytoplasm. This Oryza sativa subsp. japonica (Rice) protein is 22.3 kDa class VI heat shock protein (HSP22.3).